A 93-amino-acid chain; its full sequence is Small ribosomal subunit protein uS17 (93 aa).

The protein belongs to the universal ribosomal protein uS17 family. Part of the 30S ribosomal subunit.

Functionally, one of the primary rRNA binding proteins, it binds specifically to the 5'-end of 16S ribosomal RNA. The chain is Small ribosomal subunit protein uS17 from Bordetella avium (strain 197N).